Reading from the N-terminus, the 160-residue chain is Transcription elongation factor GreA (160 aa).

Residues 50–70 are a coiled coil; sequence AAREQQSFNEGRIQELEAKLS.

Belongs to the GreA/GreB family.

Its function is as follows. Necessary for efficient RNA polymerase transcription elongation past template-encoded arresting sites. The arresting sites in DNA have the property of trapping a certain fraction of elongating RNA polymerases that pass through, resulting in locked ternary complexes. Cleavage of the nascent transcript by cleavage factors such as GreA or GreB allows the resumption of elongation from the new 3'terminus. GreA releases sequences of 2 to 3 nucleotides. The polypeptide is Transcription elongation factor GreA (Legionella pneumophila (strain Corby)).